Here is a 247-residue protein sequence, read N- to C-terminus: 3-deoxy-manno-octulosonate cytidylyltransferase (247 aa).

It belongs to the KdsB family.

It is found in the cytoplasm. It carries out the reaction 3-deoxy-alpha-D-manno-oct-2-ulosonate + CTP = CMP-3-deoxy-beta-D-manno-octulosonate + diphosphate. It participates in nucleotide-sugar biosynthesis; CMP-3-deoxy-D-manno-octulosonate biosynthesis; CMP-3-deoxy-D-manno-octulosonate from 3-deoxy-D-manno-octulosonate and CTP: step 1/1. It functions in the pathway bacterial outer membrane biogenesis; lipopolysaccharide biosynthesis. Activates KDO (a required 8-carbon sugar) for incorporation into bacterial lipopolysaccharide in Gram-negative bacteria. The chain is 3-deoxy-manno-octulosonate cytidylyltransferase from Leptospira interrogans serogroup Icterohaemorrhagiae serovar Lai (strain 56601).